A 426-amino-acid polypeptide reads, in one-letter code: Histidine--tRNA ligase (426 aa).

It belongs to the class-II aminoacyl-tRNA synthetase family.

It is found in the cytoplasm. It carries out the reaction tRNA(His) + L-histidine + ATP = L-histidyl-tRNA(His) + AMP + diphosphate + H(+). This Saccharolobus islandicus (strain L.S.2.15 / Lassen #1) (Sulfolobus islandicus) protein is Histidine--tRNA ligase.